A 295-amino-acid polypeptide reads, in one-letter code: 4-diphosphocytidyl-2-C-methyl-D-erythritol kinase (295 aa).

Lys15 is a catalytic residue. Residue 102–112 participates in ATP binding; it reads PIASGVGGGSS. Asp144 is a catalytic residue.

This sequence belongs to the GHMP kinase family. IspE subfamily.

It catalyses the reaction 4-CDP-2-C-methyl-D-erythritol + ATP = 4-CDP-2-C-methyl-D-erythritol 2-phosphate + ADP + H(+). The protein operates within isoprenoid biosynthesis; isopentenyl diphosphate biosynthesis via DXP pathway; isopentenyl diphosphate from 1-deoxy-D-xylulose 5-phosphate: step 3/6. Catalyzes the phosphorylation of the position 2 hydroxy group of 4-diphosphocytidyl-2C-methyl-D-erythritol. The protein is 4-diphosphocytidyl-2-C-methyl-D-erythritol kinase of Mesorhizobium japonicum (strain LMG 29417 / CECT 9101 / MAFF 303099) (Mesorhizobium loti (strain MAFF 303099)).